Reading from the N-terminus, the 182-residue chain is Large ribosomal subunit protein uL5 (182 aa).

The protein belongs to the universal ribosomal protein uL5 family. Part of the 50S ribosomal subunit; part of the 5S rRNA/L5/L18/L25 subcomplex. Contacts the 5S rRNA and the P site tRNA. Forms a bridge to the 30S subunit in the 70S ribosome.

In terms of biological role, this is one of the proteins that bind and probably mediate the attachment of the 5S RNA into the large ribosomal subunit, where it forms part of the central protuberance. In the 70S ribosome it contacts protein S13 of the 30S subunit (bridge B1b), connecting the 2 subunits; this bridge is implicated in subunit movement. Contacts the P site tRNA; the 5S rRNA and some of its associated proteins might help stabilize positioning of ribosome-bound tRNAs. In Borreliella afzelii (strain PKo) (Borrelia afzelii), this protein is Large ribosomal subunit protein uL5.